We begin with the raw amino-acid sequence, 72 residues long: Probable neurotoxin pcD-993 (72 aa).

The N-terminal stretch at 1-19 (MNYLVMISFALLLVIGVES) is a signal peptide. The LCN-type CS-alpha/beta domain occupies 21–72 (RDGYFVEPDNCVVHCMPSSEMCDRGCKHNGATSGSCKAFSKGGNACWCKGLR). Intrachain disulfides connect cysteine 35/cysteine 56, cysteine 42/cysteine 66, and cysteine 46/cysteine 68. Residue arginine 72 is a propeptide, removed by a carboxypeptidase.

This sequence belongs to the long (3 C-C) scorpion toxin superfamily. In terms of tissue distribution, expressed by the venom gland.

It is found in the secreted. The sequence is that of Probable neurotoxin pcD-993 from Androctonus australis (Sahara scorpion).